The primary structure comprises 91 residues: Na(+)/H(+) antiporter subunit F (91 aa).

Transmembrane regions (helical) follow at residues 5–27 (ILMIVLVVMSISLFVCFIRTLIG), 34–53 (IVALDTFGINLIGFIGVIMM), and 63–82 (VVLVISILAFIGSIALSKFI).

The protein belongs to the CPA3 antiporters (TC 2.A.63) subunit F family. Forms a heterooligomeric complex that consists of seven subunits: MrpA, MrpB, MrpC, MrpD, MrpE, MrpF and MrpG.

Its subcellular location is the cell membrane. Functionally, mnh complex is a Na(+)Li(+)/H(+) antiporter involved in Na(+) and/or Li(+) excretion and Na(+) resistance. Na(+)/H(+) antiport consumes a transmembrane electrical potential, and is thus inferred to be electrogenic. Does not transport K(+), Ca(2+) or Mg(2+). This Alkalihalophilus pseudofirmus (strain ATCC BAA-2126 / JCM 17055 / OF4) (Bacillus pseudofirmus) protein is Na(+)/H(+) antiporter subunit F (mrpF).